Consider the following 500-residue polypeptide: L-arabinose isomerase (500 aa).

4 residues coordinate Mn(2+): E306, E333, H350, and H450.

The protein belongs to the arabinose isomerase family. Homohexamer. It depends on Mn(2+) as a cofactor.

It carries out the reaction beta-L-arabinopyranose = L-ribulose. It participates in carbohydrate degradation; L-arabinose degradation via L-ribulose; D-xylulose 5-phosphate from L-arabinose (bacterial route): step 1/3. Its function is as follows. Catalyzes the conversion of L-arabinose to L-ribulose. In Klebsiella pneumoniae (strain 342), this protein is L-arabinose isomerase.